Consider the following 260-residue polypeptide: Triosephosphate isomerase (260 aa).

11-13 serves as a coordination point for substrate; the sequence is NWK. His103 acts as the Electrophile in catalysis. The active-site Proton acceptor is Glu175. Substrate contacts are provided by residues Gly181, Ser220, and 241–242; that span reads GG.

Belongs to the triosephosphate isomerase family. In terms of assembly, homodimer.

The protein resides in the cytoplasm. The catalysed reaction is D-glyceraldehyde 3-phosphate = dihydroxyacetone phosphate. It participates in carbohydrate biosynthesis; gluconeogenesis. Its pathway is carbohydrate degradation; glycolysis; D-glyceraldehyde 3-phosphate from glycerone phosphate: step 1/1. Its function is as follows. Involved in the gluconeogenesis. Catalyzes stereospecifically the conversion of dihydroxyacetone phosphate (DHAP) to D-glyceraldehyde-3-phosphate (G3P). In Shewanella pealeana (strain ATCC 700345 / ANG-SQ1), this protein is Triosephosphate isomerase.